Reading from the N-terminus, the 1676-residue chain is Anucleate primary sterigmata protein A (1676 aa).

The segment covering methionine 1–methionine 11 has biased composition (polar residues). Residues methionine 1–tyrosine 35 are disordered. Residues alanine 51–phenylalanine 127 adopt a coiled-coil conformation. Disordered stretches follow at residues glutamine 160–asparagine 180, arginine 353–histidine 394, aspartate 439–proline 712, glycine 1027–proline 1050, proline 1176–alanine 1201, valine 1220–serine 1270, and proline 1297–serine 1354. Over residues asparagine 163 to serine 172 the composition is skewed to low complexity. Coiled-coil stretches lie at residues threonine 193–alanine 359 and histidine 408–glycine 453. Composition is skewed to basic and acidic residues over residues arginine 355 to aspartate 370, aspartate 439 to serine 448, threonine 461 to arginine 470, lysine 479 to aspartate 489, and alanine 503 to alanine 522. Residues serine 593–alanine 602 are compositionally biased toward low complexity. The span at aspartate 609–threonine 620 shows a compositional bias: polar residues. A compositionally biased stretch (basic residues) spans tyrosine 623–arginine 636. Residues serine 647 to threonine 664 are compositionally biased toward polar residues. The segment covering alanine 678 to phenylalanine 687 has biased composition (acidic residues). Residues threonine 1032 to serine 1042 show a composition bias toward low complexity. A compositionally biased stretch (polar residues) spans serine 1191–alanine 1201. Residues arginine 1314–alanine 1341 show a composition bias toward polar residues. The region spanning glutamine 1393–valine 1504 is the PH domain. The segment covering glutamate 1511–glutamate 1524 has biased composition (acidic residues). 2 disordered regions span residues glutamate 1511–serine 1589 and histidine 1654–histidine 1676. Composition is skewed to polar residues over residues arginine 1534–glycine 1548 and tyrosine 1580–serine 1589.

It localises to the membrane. In terms of biological role, required for nuclear positioning and completion of asexual development. The sequence is that of Anucleate primary sterigmata protein A (apsA) from Emericella nidulans (strain FGSC A4 / ATCC 38163 / CBS 112.46 / NRRL 194 / M139) (Aspergillus nidulans).